The following is a 311-amino-acid chain: MSEERELLRETVAALVEKHASPEAVRAAMESELGYDPNLWRLLCEQVGAAALVIPEEFGGAGGELADAAVVLEELGKALVPTPLLGTTLAEIALLSVGRTEPLEELAEGAKIGTVVFNPEFVINGDIADIMIAADGETLTQWDTFTAQPKPTMDMTRRLASVIPGATTTLGDDQGLADTAALLMAAEQIGAASRCLDLTVAYSKDRVQFGRPIGSFQALKHRMADLYVKVASARAVVHDSIATPSSTSAALARYFASEALSAVTSEAVQIHGGIAITWEHDIQLYFKRAHGSAQLLGPPREQLRRLEAEVF.

Positions 206 and 273 each coordinate FAD.

Belongs to the acyl-CoA dehydrogenase family. In terms of assembly, heterotetramer composed of 2 IpdE1 subunits and 2 IpdE2 subunits. The cofactor is FAD.

The enzyme catalyses 3-[(3aS,4S,5R,7aS)-5-hydroxy-7a-methyl-1-oxo-octahydro-1H-inden-4-yl]propanoyl-CoA + A = (2E)-3-[(3aS,4S,5R,7aS)-5-hydroxy-7a-methyl-1-oxo-octahydro-1H-inden-4-yl]prop-2-enoyl-CoA + AH2. It functions in the pathway steroid metabolism; cholesterol degradation. Functionally, involved in cholesterol degradation. Catalyzes the dehydrogenation of 5OH-HIP-CoA to 5OH-HIPE-CoA. In Mycolicibacterium smegmatis (strain ATCC 700084 / mc(2)155) (Mycobacterium smegmatis), this protein is Acyl-CoA dehydrogenase IpdE2.